We begin with the raw amino-acid sequence, 235 residues long: Protein MAINTENANCE OF PSII UNDER HIGH LIGHT 1 (235 aa).

Residues 127–147 traverse the membrane as a helical segment; that stretch reads TAAIVAGIALIAVAAASSILL. Residues 181-235 are disordered; the sequence is QPSTPSVTEAPPVAELETSLPETPSVAQQETSLPETMASEAQPEASSVPTTSSTS. Polar residues-rich tracts occupy residues 200-214 and 224-235; these read LPET…TSLP and EASSVPTTSSTS.

Interacts with psbA, psbB, psbC and psbD.

It is found in the plastid. The protein resides in the chloroplast thylakoid membrane. Interacts with photosystem II (PSII) core complexes and participates in the maintenance of normal PSII activity under photoinhibitory stress. May protect against photodamage or stabilize PSII under high-light stress. Participates in the maintainance of proper PSII function under high-light stress by protecting PSII from photooxidative damage. The polypeptide is Protein MAINTENANCE OF PSII UNDER HIGH LIGHT 1 (Arabidopsis thaliana (Mouse-ear cress)).